The chain runs to 453 residues: MSNISSIVNRARDAFNSGKTRPLQFRVEQLEALQRMINENLKGISKALASNLRKNEWTSYYEEVAHVLDEIDFTIKGLSDWAEDEPVAKTRQTQEDDLYIHSEPLGVVLVIGAWNYPFNLTIQPMVGAIAAGNAVVLKPSEVSDHMADLLSTLIPQYMDKDLYPVIKGGVPETTELLKEKFDHIMYTGSTAVGKIVMAAAAKHLTPVTLELGGKSPCYVDKDCDLDVACRRIAWGKFMNSGQTCVAPDYILCDPSIQNEIVEKLKKSLKDFYGEDAKQSHDYGRIINDRHFQRVINLIDSKKVAHGGTWDQPSRYIAPTILVDVDPQSPVMQEEIFGPVMPIVCVRSLDEAIKFINQREKPLALYVFSNNDKVIKKMIAETSSGGVTANDVIVHITVPTLPFGGVGNSGMGAYHGKKSFETFSHRRSCLVRSLRNEEANKARYPPSPAKMPRH.

Ser-2 is modified (N-acetylserine). N6-acetyllysine is present on Lys-178. NAD(+) is bound at residue 188-193 (GSTAVG). Lys-194 carries the N6-acetyllysine modification. Active-site residues include Glu-210 and Cys-244.

This sequence belongs to the aldehyde dehydrogenase family. As to quaternary structure, homodimer. As to expression, constitutively expressed in cornea, stomach, skin, bladder and lungs. Lowest expression levels in lungs and bladder.

It is found in the cytoplasm. It catalyses the reaction an aldehyde + NAD(+) + H2O = a carboxylate + NADH + 2 H(+). It carries out the reaction octanal + NAD(+) + H2O = octanoate + NADH + 2 H(+). Functionally, ALDHs play a major role in the detoxification of alcohol-derived acetaldehyde. They are involved in the metabolism of corticosteroids, biogenic amines, neurotransmitters, and lipid peroxidation. Oxidizes medium and long chain aldehydes into non-toxic fatty acids. Preferentially oxidizes aromatic aldehyde substrates. Comprises about 50 percent of corneal epithelial soluble proteins. May play a role in preventing corneal damage caused by ultraviolet light. The protein is Aldehyde dehydrogenase, dimeric NADP-preferring (Aldh3a1) of Mus musculus (Mouse).